The sequence spans 209 residues: Ribosomal RNA large subunit methyltransferase E (209 aa).

Residues Gly63, Trp65, Asp83, Asp99, and Asp124 each contribute to the S-adenosyl-L-methionine site. Lys164 (proton acceptor) is an active-site residue.

The protein belongs to the class I-like SAM-binding methyltransferase superfamily. RNA methyltransferase RlmE family.

It is found in the cytoplasm. The catalysed reaction is uridine(2552) in 23S rRNA + S-adenosyl-L-methionine = 2'-O-methyluridine(2552) in 23S rRNA + S-adenosyl-L-homocysteine + H(+). In terms of biological role, specifically methylates the uridine in position 2552 of 23S rRNA at the 2'-O position of the ribose in the fully assembled 50S ribosomal subunit. The polypeptide is Ribosomal RNA large subunit methyltransferase E (Serratia proteamaculans (strain 568)).